A 463-amino-acid chain; its full sequence is Zinc finger protein PLAGL1 (463 aa).

7 C2H2-type zinc fingers span residues 4-26 (YPCQLCGKTFLTLEKFTIHNYSH), 32-56 (YKCLQPDCGKAFISRYKLMRHMATH), 62-84 (HQCAHCEKTFNRKDHLKNHLQTH), 91-113 (FGCEECGKKYNTMLGYKRHLALH), 120-142 (LTCGVCALELGSTEVLLDHLKAH), 156-178 (HQCDHCERCFYTRKDVRRHLVVH), and 184-207 (FLCQFCAQRFGRKDHLTRHTKKTH). The segment at 285–310 (LHPVAPPTSPPQPLQNHKYNTSSTSY) is disordered. A compositionally biased stretch (pro residues) spans 287–297 (PVAPPTSPPQP). The span at 298–310 (LQNHKYNTSSTSY) shows a compositional bias: polar residues.

The protein belongs to the krueppel C2H2-type zinc-finger protein family. In terms of assembly, interacts with THRSP.

It is found in the nucleus. Its function is as follows. Acts as a transcriptional activator. Involved in the transcriptional regulation of type 1 receptor for pituitary adenylate cyclase-activating polypeptide. This chain is Zinc finger protein PLAGL1 (PLAGL1), found in Sus scrofa (Pig).